Here is a 198-residue protein sequence, read N- to C-terminus: Small ribosomal subunit protein eS1 (198 aa).

It belongs to the eukaryotic ribosomal protein eS1 family.

The protein is Small ribosomal subunit protein eS1 of Nanoarchaeum equitans (strain Kin4-M).